Here is a 189-residue protein sequence, read N- to C-terminus: Peptidyl-tRNA hydrolase (189 aa).

A tRNA-binding site is contributed by Y15. The active-site Proton acceptor is the H20. F66, N68, and N114 together coordinate tRNA.

The protein belongs to the PTH family. In terms of assembly, monomer.

It localises to the cytoplasm. The enzyme catalyses an N-acyl-L-alpha-aminoacyl-tRNA + H2O = an N-acyl-L-amino acid + a tRNA + H(+). In terms of biological role, hydrolyzes ribosome-free peptidyl-tRNAs (with 1 or more amino acids incorporated), which drop off the ribosome during protein synthesis, or as a result of ribosome stalling. Functionally, catalyzes the release of premature peptidyl moieties from peptidyl-tRNA molecules trapped in stalled 50S ribosomal subunits, and thus maintains levels of free tRNAs and 50S ribosomes. The chain is Peptidyl-tRNA hydrolase from Streptococcus pyogenes serotype M1.